A 207-amino-acid chain; its full sequence is Cytochrome c oxidase subunit 3 (207 aa).

A run of 5 helical transmembrane segments spans residues 30–50, 67–87, 101–121, 144–164, and 186–206; these read FWLF…TFLA, VTLV…SVYA, LWLG…IYEF, LVGT…TLMI, and WHFI…MGMV.

The protein belongs to the cytochrome c oxidase subunit 3 family.

The protein resides in the cell membrane. It catalyses the reaction 4 Fe(II)-[cytochrome c] + O2 + 8 H(+)(in) = 4 Fe(III)-[cytochrome c] + 2 H2O + 4 H(+)(out). This chain is Cytochrome c oxidase subunit 3 (ctaE), found in Bacillus subtilis (strain 168).